A 290-amino-acid polypeptide reads, in one-letter code: uncharacterized protein (290 aa).

This is an uncharacterized protein from Escherichia phage lambda (Bacteriophage lambda).